The following is a 183-amino-acid chain: Peptidyl-prolyl cis-trans isomerase H (183 aa).

In terms of domain architecture, PPIase cyclophilin-type spans 19–182 (FFDVALGGEP…QDVVIIQCGE (164 aa)).

This sequence belongs to the cyclophilin-type PPIase family. PPIase H subfamily.

It localises to the nucleus. The enzyme catalyses [protein]-peptidylproline (omega=180) = [protein]-peptidylproline (omega=0). In terms of biological role, PPIases accelerate the folding of proteins. It catalyzes the cis-trans isomerization of proline imidic peptide bonds in oligopeptides. This chain is Peptidyl-prolyl cis-trans isomerase H (cyp3), found in Emericella nidulans (strain FGSC A4 / ATCC 38163 / CBS 112.46 / NRRL 194 / M139) (Aspergillus nidulans).